Reading from the N-terminus, the 125-residue chain is Histone H2B type 1 (125 aa).

Residues Met-1–Glu-36 form a disordered region. Pro-2 is subject to N-acetylproline. ADP-ribosyl glutamic acid is present on Glu-3. An N6-(2-hydroxyisobutyryl)lysine; alternate modification is found at Lys-6. Lys-6 carries the N6-(beta-hydroxybutyryl)lysine; alternate modification. The residue at position 6 (Lys-6) is an N6-acetyllysine; alternate. Position 6 is an N6-butyryllysine; alternate (Lys-6). An N6-crotonyllysine; alternate modification is found at Lys-6. Lys-6 is modified (N6-lactoyllysine; alternate). Lys-6 participates in a covalent cross-link: Glycyl lysine isopeptide (Lys-Gly) (interchain with G-Cter in SUMO2); alternate. Ser-7 bears the ADP-ribosylserine mark. Basic residues predominate over residues Pro-9–Val-19. Lys-12 bears the N6-(beta-hydroxybutyryl)lysine; alternate mark. Lys-12 and Lys-13 each carry N6-acetyllysine; alternate. Residues Lys-12 and Lys-13 each carry the N6-crotonyllysine; alternate modification. The residue at position 12 (Lys-12) is an N6-lactoyllysine; alternate. N6-(2-hydroxyisobutyryl)lysine; alternate is present on Lys-13. Ser-15 carries the post-translational modification Phosphoserine; by STK4/MST1. Residues Lys-16, Lys-17, Lys-21, and Lys-24 each carry the N6-acetyllysine; alternate modification. N6-crotonyllysine; alternate is present on residues Lys-16, Lys-17, Lys-21, and Lys-24. 4 positions are modified to N6-lactoyllysine; alternate: Lys-16, Lys-17, Lys-21, and Lys-24. Lys-17 is modified (N6-glutaryllysine; alternate). An N6-(2-hydroxyisobutyryl)lysine; alternate mark is found at Lys-21 and Lys-24. Lys-21 bears the N6-(beta-hydroxybutyryl)lysine; alternate mark. Residue Lys-21 is modified to N6-butyryllysine; alternate. Residue Lys-21 forms a Glycyl lysine isopeptide (Lys-Gly) (interchain with G-Cter in SUMO2); alternate linkage. Lys-25 is subject to N6-(2-hydroxyisobutyryl)lysine. The residue at position 35 (Lys-35) is an N6-(2-hydroxyisobutyryl)lysine; alternate. Lys-35 carries the N6-(beta-hydroxybutyryl)lysine; alternate modification. An N6-crotonyllysine; alternate modification is found at Lys-35. At Lys-35 the chain carries N6-glutaryllysine; alternate. Lys-35 carries the N6-succinyllysine; alternate modification. Residue Lys-35 forms a Glycyl lysine isopeptide (Lys-Gly) (interchain with G-Cter in ubiquitin); alternate linkage. A PolyADP-ribosyl glutamic acid modification is found at Glu-36. Position 37 is a phosphoserine; by AMPK (Ser-37). 3 positions are modified to N6-(2-hydroxyisobutyryl)lysine; alternate: Lys-44, Lys-47, and Lys-58. N6-lactoyllysine; alternate is present on Lys-44. N6-glutaryllysine; alternate is present on residues Lys-44 and Lys-47. At Lys-47 the chain carries N6-methyllysine; alternate. At Lys-58 the chain carries N6,N6-dimethyllysine; alternate. Position 79 is a dimethylated arginine (Arg-79). Lys-85 carries the post-translational modification N6-(2-hydroxyisobutyryl)lysine; alternate. Lys-85 carries the N6-acetyllysine; alternate modification. An N6-lactoyllysine; alternate modification is found at Lys-85. Lys-85 is subject to N6,N6,N6-trimethyllysine; alternate. Arg-86 and Arg-92 each carry omega-N-methylarginine. Lys-108 is modified (N6-(2-hydroxyisobutyryl)lysine; alternate). Lys-108 carries the N6-lactoyllysine; alternate modification. Residue Lys-108 is modified to N6-glutaryllysine; alternate. Lys-108 carries the post-translational modification N6-methyllysine; alternate. O-linked (GlcNAc) serine glycosylation is present at Ser-112. A Phosphothreonine modification is found at Thr-115. N6-(2-hydroxyisobutyryl)lysine; alternate occurs at positions 116 and 120. An N6-(beta-hydroxybutyryl)lysine; alternate modification is found at Lys-116. N6-lactoyllysine; alternate is present on residues Lys-116 and Lys-120. An N6-glutaryllysine; alternate mark is found at Lys-116 and Lys-120. 2 positions are modified to N6-succinyllysine; alternate: Lys-116 and Lys-120. Residue Lys-116 is modified to N6-methylated lysine; alternate. Lys-120 is covalently cross-linked (Glycyl lysine isopeptide (Lys-Gly) (interchain with G-Cter in ubiquitin); alternate).

It belongs to the histone H2B family. The nucleosome is a histone octamer containing two molecules each of H2A, H2B, H3 and H4 assembled in one H3-H4 heterotetramer and two H2A-H2B heterodimers. The octamer wraps approximately 147 bp of DNA. In terms of processing, monoubiquitination at Lys-35 (H2BK34Ub) by the MSL1/MSL2 dimer is required for histone H3 'Lys-4' (H3K4me) and 'Lys-79' (H3K79me) methylation and transcription activation at specific gene loci, such as HOXA9 and MEIS1 loci. Similarly, monoubiquitination at Lys-120 (H2BK120Ub) by the RNF20/40 complex gives a specific tag for epigenetic transcriptional activation and is also prerequisite for histone H3 'Lys-4' and 'Lys-79' methylation. It also functions cooperatively with the FACT dimer to stimulate elongation by RNA polymerase II. H2BK120Ub also acts as a regulator of mRNA splicing: deubiquitination by USP49 is required for efficient cotranscriptional splicing of a large set of exons. Phosphorylated on Ser-15 (H2BS14ph) by STK4/MST1 during apoptosis; which facilitates apoptotic chromatin condensation. Also phosphorylated on Ser-15 in response to DNA double strand breaks (DSBs), and in correlation with somatic hypermutation and immunoglobulin class-switch recombination. Phosphorylation at Ser-37 (H2BS36ph) by AMPK in response to stress promotes transcription. Post-translationally, ADP-ribosylated by PARP1 or PARP2 on Ser-7 (H2BS6ADPr) in response to DNA damage. H2BS6ADPr promotes recruitment of CHD1L. Mono-ADP-ribosylated on Glu-3 (H2BE2ADPr) by PARP3 in response to single-strand breaks. Poly ADP-ribosylation on Glu-36 (H2BE35ADPr) by PARP1 regulates adipogenesis: it inhibits phosphorylation at Ser-37 (H2BS36ph), thereby blocking expression of pro-adipogenetic genes. In terms of processing, crotonylation (Kcr) is specifically present in male germ cells and marks testis-specific genes in post-meiotic cells, including X-linked genes that escape sex chromosome inactivation in haploid cells. Crotonylation marks active promoters and enhancers and confers resistance to transcriptional repressors. It is also associated with post-meiotically activated genes on autosomes. GlcNAcylation at Ser-112 promotes monoubiquitination of Lys-120. It fluctuates in response to extracellular glucose, and associates with transcribed genes. Post-translationally, lactylated in macrophages by EP300/P300 by using lactoyl-CoA directly derived from endogenous or exogenous lactate, leading to stimulates gene transcription.

The protein localises to the nucleus. It localises to the chromosome. Core component of nucleosome. Nucleosomes wrap and compact DNA into chromatin, limiting DNA accessibility to the cellular machineries which require DNA as a template. Histones thereby play a central role in transcription regulation, DNA repair, DNA replication and chromosomal stability. DNA accessibility is regulated via a complex set of post-translational modifications of histones, also called histone code, and nucleosome remodeling. In terms of biological role, has broad antibacterial activity. May contribute to the formation of the functional antimicrobial barrier of the colonic epithelium, and to the bactericidal activity of amniotic fluid. The sequence is that of Histone H2B type 1 from Rattus norvegicus (Rat).